A 422-amino-acid polypeptide reads, in one-letter code: tRNA hydroxylation protein P (422 aa).

A signal peptide spans 1-58 (MNQVELLSPAGNLKKLKIALNYGADAVYGGVSHFSLRNRAGKEFTLETFKEGIDYAHA).

The protein belongs to the peptidase U32 family.

Its function is as follows. Involved in prephenate-dependent formation of 5-hydroxyuridine (ho5U) modification at position 34 in tRNAs, the first step in 5-carboxymethoxyuridine (cmo5U) biosynthesis. In Helicobacter pylori (strain J99 / ATCC 700824) (Campylobacter pylori J99), this protein is tRNA hydroxylation protein P.